We begin with the raw amino-acid sequence, 1436 residues long: DNA polymerase III PolC-type (1436 aa).

An Exonuclease domain is found at 420-576 (YVVFDVETTG…YDTEATAYIF (157 aa)).

Belongs to the DNA polymerase type-C family. PolC subfamily.

It localises to the cytoplasm. The enzyme catalyses DNA(n) + a 2'-deoxyribonucleoside 5'-triphosphate = DNA(n+1) + diphosphate. Functionally, required for replicative DNA synthesis. This DNA polymerase also exhibits 3' to 5' exonuclease activity. The protein is DNA polymerase III PolC-type of Staphylococcus aureus (strain MW2).